The following is a 648-amino-acid chain: Transcription termination factor FttA (648 aa).

The interval 9 to 76 (DDILKEIREI…ISVRPDPDIL (68 aa)) is KHa. The KHb stretch occupies residues 77-144 (LPPEKAEELI…WAPRVVRTPP (68 aa)). Residues 185 to 395 (WIRITGLGGF…LVMESTYGGS (211 aa)) form a metallo-beta-lactamase N-terminus region. Zn(2+)-binding residues include histidine 253, histidine 255, aspartate 257, histidine 258, histidine 341, and aspartate 364. The beta-Casp stretch occupies residues 396–589 (NDYQMPREEA…MEVHTIDGFS (194 aa)). A metallo-beta-lactamase C-terminus region spans residues 590 to 648 (GHADRRELMSYVARVRPRPERIITVHGEAHKCLDLSSSIHKKFGISTRAPNNLDAIRLK). Histidine 615 serves as a coordination point for Zn(2+).

This sequence belongs to the metallo-beta-lactamase superfamily. RNA-metabolizing metallo-beta-lactamase-like family. FttA subfamily. In terms of assembly, homodimer. Probably interacts transiently with RNA polymerase (RNAP), (via at least the RNAP stalk subunits Rpo4 and Rpo7), interacts transiently with the Spt4-Spt5 complex. It depends on Zn(2+) as a cofactor.

With respect to regulation, transcription termination is stimulated by the Spt4-Spt5 complex. Dipicolinic acid inhibits FttA-mediated termination in vitro and inhibits growth in vivo. Its function is as follows. Terminates transcription on the whole genome. Termination is linked to FttA-mediated RNA cleavage and does not require NTP hydrolysis. Cleaves endonucleolytically at the RNA exit channel of RNA polymerase (RNAP); the 5'-3' exonuclease activity of this protein degrades the nascent RNA released from RNAP. Functionally, facilitates transcription termination; addition of this factor to stalled transcription elongation complexes (TEC) promotes nascent transcript cleavage and releases RNA polymerase (RNAP) from DNA in vitro. Transcription termination competes with productive transcription elongation. Termination is stimulated by C-rich transcripts and inhibited by G-rich transcripts; the Spt4-Spt5 complex enhances termination on C-less transcripts. Yields an approximately 100 nucleotide RNA, consistent with endonucleolytic cleavage at the RNA exit channel of RNAP. This Thermococcus kodakarensis (strain ATCC BAA-918 / JCM 12380 / KOD1) (Pyrococcus kodakaraensis (strain KOD1)) protein is Transcription termination factor FttA.